We begin with the raw amino-acid sequence, 402 residues long: MQEIEQRIYLAATYDTKGEEAEYLRQLLRRDGVMVVTVDVATSGQGSPAMVSAQEVAACHPQGAQAVFTGERGSAIVAMALAFERYLAGQRDVGAVLGIGGSGGTALVTPAMRALPVGVPKLMVSTMASGNVAPYVGPSDIAMMYSVTDVAGLNRISRRVLANAAGAIAGAFRQARQPIADDGRPAVGITMFGVTTPCVQHVTAALHDRYDCLVFHATGTGGQSMEKLADSRLLAGVLDLTTTEVCDFLFGGVLACTDDRFGAIARSGVPYVGSCGALDMVNFGALDTVPAACRERLLYPHNPQVTLMRTTAQENARQGAWIAERLNRCEGQVRFLIPEGGVSALDAPGQAFHDEAADAALFQALYDHVRQTDKRRLVRVPCHINDPLFARAAVEQFHEISQ.

It belongs to the UPF0261 family.

The protein is UPF0261 protein BP1203 of Bordetella pertussis (strain Tohama I / ATCC BAA-589 / NCTC 13251).